Here is a 179-residue protein sequence, read N- to C-terminus: MSSRILTSDVIGIDALLHDHHAVLAKSTGGAVAVFANNAPAFYAVTPARMAELLALEEKLSHPGSDVALDAQFYEEPETAHVAIPCGKFAMYPAWQPDADFQRQAALWGVALRDPVTAEELAAFIAYWQAEGKVFHHIQWQQKLARSVQISRSSNGGMPQRDINSVSEPDNHIPPGFRG.

Polar residues predominate over residues 151–168; it reads SRSSNGGMPQRDINSVSE. The interval 151–179 is disordered; sequence SRSSNGGMPQRDINSVSEPDNHIPPGFRG.

The protein belongs to the DnaT family. In terms of assembly, homooligomerizes. Interacts with PriB. Component of the replication restart primosome. Primosome assembly occurs via a 'hand-off' mechanism. PriA binds to replication forks, subsequently PriB then DnaT bind; DnaT then displaces ssDNA to generate the helicase loading substrate.

In terms of biological role, involved in the restart of stalled replication forks, which reloads the replicative helicase on sites other than the origin of replication. Can function in multiple replication restart pathways. Displaces ssDNA from a PriB-ssDNA complex. Probably forms a spiral filament on ssDNA. This chain is Replication restart protein DnaT, found in Salmonella arizonae (strain ATCC BAA-731 / CDC346-86 / RSK2980).